Reading from the N-terminus, the 508-residue chain is tRNA-2-methylthio-N(6)-dimethylallyladenosine synthase (508 aa).

The disordered stretch occupies residues 1 to 21; sequence MNEEQRKASGQVSSSDKKSEK. Residues 65-183 form the MTTase N-terminal domain; that stretch reads RKFYIRTYGC…LPELLSECYL (119 aa). [4Fe-4S] cluster contacts are provided by C74, C110, C144, C220, C224, and C227. The 231-residue stretch at 206 to 436 folds into the Radical SAM core domain; sequence RQGKIKGWVN…NALVNEISAK (231 aa). One can recognise a TRAM domain in the interval 439–502; the sequence is KEYEGQTVEV…TWSLDGEMVG (64 aa).

The protein belongs to the methylthiotransferase family. MiaB subfamily. Monomer. It depends on [4Fe-4S] cluster as a cofactor.

The protein localises to the cytoplasm. It catalyses the reaction N(6)-dimethylallyladenosine(37) in tRNA + (sulfur carrier)-SH + AH2 + 2 S-adenosyl-L-methionine = 2-methylsulfanyl-N(6)-dimethylallyladenosine(37) in tRNA + (sulfur carrier)-H + 5'-deoxyadenosine + L-methionine + A + S-adenosyl-L-homocysteine + 2 H(+). Its function is as follows. Catalyzes the methylthiolation of N6-(dimethylallyl)adenosine (i(6)A), leading to the formation of 2-methylthio-N6-(dimethylallyl)adenosine (ms(2)i(6)A) at position 37 in tRNAs that read codons beginning with uridine. This chain is tRNA-2-methylthio-N(6)-dimethylallyladenosine synthase, found in Bacillus pumilus (strain SAFR-032).